Here is a 461-residue protein sequence, read N- to C-terminus: Chromosomal replication initiator protein DnaA (461 aa).

The domain I, interacts with DnaA modulators stretch occupies residues 1 to 87 (MAVSLWQQCI…IGSRPSAKPV (87 aa)). The interval 87–124 (VVQATAAVRTSRPVTREVTKPSFNTPHAEPMANANHRS) is domain II. Residues 99–125 (PVTREVTKPSFNTPHAEPMANANHRSN) are disordered. Residues 125 to 341 (NINPTYQFDN…GALNRVIANA (217 aa)) are domain III, AAA+ region. ATP is bound by residues Gly169, Gly171, Lys172, and Thr173. Residues 342–461 (NFTGRPITID…YANLIRTLSS (120 aa)) form a domain IV, binds dsDNA region.

The protein belongs to the DnaA family. In terms of assembly, oligomerizes as a right-handed, spiral filament on DNA at oriC.

The protein resides in the cytoplasm. Its function is as follows. Plays an essential role in the initiation and regulation of chromosomal replication. ATP-DnaA binds to the origin of replication (oriC) to initiate formation of the DNA replication initiation complex once per cell cycle. Binds the DnaA box (a 9 base pair repeat at the origin) and separates the double-stranded (ds)DNA. Forms a right-handed helical filament on oriC DNA; dsDNA binds to the exterior of the filament while single-stranded (ss)DNA is stabiized in the filament's interior. The ATP-DnaA-oriC complex binds and stabilizes one strand of the AT-rich DNA unwinding element (DUE), permitting loading of DNA polymerase. After initiation quickly degrades to an ADP-DnaA complex that is not apt for DNA replication. Binds acidic phospholipids. The chain is Chromosomal replication initiator protein DnaA from Shewanella pealeana (strain ATCC 700345 / ANG-SQ1).